A 299-amino-acid chain; its full sequence is tRNA dimethylallyltransferase (299 aa).

Position 10–17 (10–17) interacts with ATP; that stretch reads GPTASGKS. 12–17 serves as a coordination point for substrate; it reads TASGKS.

The protein belongs to the IPP transferase family. Monomer. Requires Mg(2+) as cofactor.

The catalysed reaction is adenosine(37) in tRNA + dimethylallyl diphosphate = N(6)-dimethylallyladenosine(37) in tRNA + diphosphate. Its function is as follows. Catalyzes the transfer of a dimethylallyl group onto the adenine at position 37 in tRNAs that read codons beginning with uridine, leading to the formation of N6-(dimethylallyl)adenosine (i(6)A). The polypeptide is tRNA dimethylallyltransferase (Malacoplasma penetrans (strain HF-2) (Mycoplasma penetrans)).